The following is a 514-amino-acid chain: MDYSDDDMIDNESGEENNSDGGGNESYNYNAAVDTIILSEKSYVIIKEEEILKLQRDDIERVSTILFLSQVEAIVLLLHYHWCVSKLEDEWFTDEERIRKTVGILKEPVVDVNGTEVDIQCGICFESYTRKEIASVSCGHPYCKTCWTGYITTKIEDGPGCLRVKCPEPSCYAVVGQDMIDEVTEKKDKDKYYRYFLRSYVEDGKKMKWCPSPGCECAVEFGESSGYDVACLCSYRFCWNCSEDAHSPVDCETVSKWIFKNQDESENKNWILANSKPCPKCKRPIEKSHGCNHMTCSASCGHRFCWICGKSYSDHYACNNYVEDADHDKRTLLQSEIKRYTHYYVRWVENQSSRLKAMSDLEKFQSVQLKQLSDNQCKPKIDLQFIVDAWLQIIECRRVLKWTYAYGYYLDNLAKRPLFEYLQGEAETGLERLHHCAENELKQFFIKSEDPSDTFNAFRMKLTGLTKVTKTYFDNLVKALENGLADVTKSSEESADFLETQKLYDAYISEGCFF.

Acidic residues predominate over residues 1–18 (MDYSDDDMIDNESGEENN). The tract at residues 1–26 (MDYSDDDMIDNESGEENNSDGGGNES) is disordered. A TRIAD supradomain region spans residues 117–322 (VDIQCGICFE…SDHYACNNYV (206 aa)). Residues Cys121, Cys124, Cys138, His140, Cys143, Cys146, Cys166, Cys171, Cys210, Cys215, Cys231, Cys233, Cys238, Cys241, His246, Cys251, Cys278, and Cys281 each coordinate Zn(2+). An RING-type 1 zinc finger spans residues 121-171 (CGICFESYTRKEIASVSCGHPYCKTCWTGYITTKIEDGPGCLRVKCPEPSC). The IBR-type zinc finger occupies 190–251 (DKYYRYFLRS…SEDAHSPVDC (62 aa)). An RING-type 2; atypical zinc finger spans residues 278 to 308 (CPKCKRPIEKSHGCNHMTCSASCGHRFCWIC). Cys291 is an active-site residue. 6 residues coordinate Zn(2+): Cys296, Cys300, Cys305, Cys308, His315, and Cys318.

Belongs to the RBR family. Ariadne subfamily. Zn(2+) is required as a cofactor.

The enzyme catalyses [E2 ubiquitin-conjugating enzyme]-S-ubiquitinyl-L-cysteine + [acceptor protein]-L-lysine = [E2 ubiquitin-conjugating enzyme]-L-cysteine + [acceptor protein]-N(6)-ubiquitinyl-L-lysine.. Its pathway is protein modification; protein ubiquitination. Functionally, might act as an E3 ubiquitin-protein ligase, or as part of E3 complex, which accepts ubiquitin from specific E2 ubiquitin-conjugating enzymes and then transfers it to substrates. This is Probable E3 ubiquitin-protein ligase ARI10 (ARI10) from Arabidopsis thaliana (Mouse-ear cress).